A 106-amino-acid chain; its full sequence is UPF0060 membrane protein RL1530 (106 aa).

4 consecutive transmembrane segments (helical) span residues 4 to 24 (IIFA…WAWL), 30 to 50 (VWWL…LTLV), 58 to 78 (TFAA…WLVE), and 86 to 106 (DIGG…APRG).

The protein belongs to the UPF0060 family.

The protein localises to the cell inner membrane. In Rhizobium johnstonii (strain DSM 114642 / LMG 32736 / 3841) (Rhizobium leguminosarum bv. viciae), this protein is UPF0060 membrane protein RL1530.